The primary structure comprises 2278 residues: Protein Ycf2 (2278 aa).

Belongs to the Ycf2 family.

The protein localises to the plastid. Its subcellular location is the chloroplast stroma. The protein resides in the chromoplast stroma. Probable ATPase of unknown function. Its presence in a non-photosynthetic plant (Epifagus virginiana) and experiments in tobacco indicate that it has an essential function which is probably not related to photosynthesis. This chain is Protein Ycf2 (ycf2-A), found in Solanum lycopersicum (Tomato).